Reading from the N-terminus, the 509-residue chain is Glycogen synthase (509 aa).

K47 is a binding site for ADP-alpha-D-glucose.

The protein belongs to the glycosyltransferase 1 family. Bacterial/plant glycogen synthase subfamily.

It catalyses the reaction [(1-&gt;4)-alpha-D-glucosyl](n) + ADP-alpha-D-glucose = [(1-&gt;4)-alpha-D-glucosyl](n+1) + ADP + H(+). It functions in the pathway glycan biosynthesis; glycogen biosynthesis. Its function is as follows. Synthesizes alpha-1,4-glucan chains using ADP-glucose. The chain is Glycogen synthase from Xanthomonas euvesicatoria pv. vesicatoria (strain 85-10) (Xanthomonas campestris pv. vesicatoria).